The primary structure comprises 136 residues: Histone H3.3C (136 aa).

Over residues 1–10 (MARTKQTACK) the composition is skewed to polar residues. Positions 1–39 (MARTKQTACKSTGRKAPRKQLATKAAHKSAPAMGGVKKP) are disordered. At R3 the chain carries Asymmetric dimethylarginine; by PRMT6. Phosphothreonine; by HASPIN is present on T4. K5 bears the Allysine; alternate mark. Position 5 is an N6,N6,N6-trimethyllysine; alternate (K5). K5 carries the post-translational modification N6,N6-dimethyllysine; alternate. The residue at position 5 (K5) is an N6-(2-hydroxyisobutyryl)lysine; alternate. K5 bears the N6-acetyllysine; alternate mark. The residue at position 5 (K5) is an N6-methyllysine; alternate. The residue at position 6 (Q6) is a 5-glutamyl dopamine; alternate. Q6 carries the 5-glutamyl serotonin; alternate modification. Residue T7 is modified to Phosphothreonine; by PKC. K10 is subject to N6-(2-hydroxyisobutyryl)lysine; alternate. Position 10 is an N6-lactoyllysine; alternate (K10). At K10 the chain carries N6-methylated lysine. S11 is subject to ADP-ribosylserine; alternate. S11 carries the post-translational modification Phosphoserine; alternate; by AURKB, AURKC, RPS6KA3, RPS6KA4 and RPS6KA5. T12 carries the post-translational modification Phosphothreonine; by PKC. The residue at position 15 (K15) is an N6-(2-hydroxyisobutyryl)lysine; alternate. Position 15 is an N6-lactoyllysine; alternate (K15). Position 15 is an N6-acetyllysine (K15). K15 is modified (N6-glutaryllysine; alternate). R18 is modified (asymmetric dimethylarginine). N6-(2-hydroxyisobutyryl)lysine; alternate occurs at positions 19, 24, and 28. K19 carries the post-translational modification N6-acetyllysine; alternate. N6-lactoyllysine; alternate occurs at positions 19, 24, and 28. An N6-glutaryllysine; alternate mark is found at K19, K24, and K28. N6-butyryllysine; alternate is present on residues K19 and K24. K19 is modified (N6-methylated lysine; alternate). K24 bears the N6-acetyllysine mark. K28 is subject to N6-acetyllysine; alternate. N6-methylated lysine; alternate is present on K28. S29 is modified (ADP-ribosylserine; alternate). The residue at position 29 (S29) is a Phosphoserine; alternate; by AURKB, AURKC and RPS6KA5. K37 carries the post-translational modification N6-(2-hydroxyisobutyryl)lysine; alternate. At K37 the chain carries N6-acetyllysine; alternate. Residue K37 is modified to N6-methylated lysine; alternate. Y42 carries the post-translational modification Phosphotyrosine. Residue K57 is modified to N6-(2-hydroxyisobutyryl)lysine; alternate. K57 carries the N6-lactoyllysine; alternate modification. K57 is subject to N6-glutaryllysine; alternate. K57 is subject to N6-succinyllysine; alternate. A Phosphoserine modification is found at S58. An N6-(2-hydroxyisobutyryl)lysine; alternate mark is found at K65 and K80. N6-methylated lysine is present on residues K65 and K80. K80 carries the post-translational modification N6-lactoyllysine; alternate. K80 is modified (N6-glutaryllysine; alternate). K80 carries the N6-succinyllysine; alternate modification. T81 is subject to Phosphothreonine. 2 positions are modified to N6-acetyllysine; alternate: K116 and K123. K116 and K123 each carry N6-glutaryllysine; alternate. Residue K123 is modified to N6-(2-hydroxyisobutyryl)lysine; alternate. Residue K123 is modified to N6-methylated lysine; alternate. K123 carries the post-translational modification N6-succinyllysine; alternate.

The protein belongs to the histone H3 family. In terms of assembly, the nucleosome is a histone octamer containing two molecules each of H2A, H2B, H3 and H4 assembled in one H3-H4 heterotetramer and two H2A-H2B heterodimers. The octamer wraps approximately 147 bp of DNA. In terms of processing, acetylation is generally linked to gene activation. Acetylation on Lys-19 (H3K18ac) and Lys-24 (H3K24ac) favors methylation at Arg-18 (H3R17me). Acetylation at Lys-123 (H3K122ac) by EP300/p300 plays a central role in chromatin structure: localizes at the surface of the histone octamer and stimulates transcription, possibly by promoting nucleosome instability. Post-translationally, asymmetric dimethylation at Arg-18 (H3R17me2a) is linked to gene activation. Asymmetric dimethylation at Arg-3 (H3R2me2a) by PRMT6 is linked to gene repression and is mutually exclusive with H3 Lys-5 methylation (H3K4me2 and H3K4me3). H3R2me2a is present at the 3' of genes regardless of their transcription state and is enriched on inactive promoters, while it is absent on active promoters. Methylation at Lys-5 (H3K4me) and Lys-80 (H3K79me) are linked to gene activation. Methylation at Lys-5 (H3K4me) facilitates subsequent acetylation of H3 and H4. Methylation at Lys-80 (H3K79me) is associated with DNA double-strand break (DSB) responses and is a specific target for TP53BP1. Methylation at Lys-10 (H3K9me) and Lys-28 (H3K27me) are linked to gene repression. Methylation at Lys-10 (H3K9me) is a specific target for HP1 proteins (CBX1, CBX3 and CBX5) and prevents subsequent phosphorylation at Ser-11 (H3S10ph) and acetylation of H3 and H4. Methylation at Lys-5 (H3K4me) and Lys-80 (H3K79me) require preliminary monoubiquitination of H2B at 'Lys-120'. In terms of processing, phosphorylated at Thr-4 (H3T3ph) by HASPIN during prophase and dephosphorylated during anaphase. Phosphorylation at Ser-11 (H3S10ph) by AURKB is crucial for chromosome condensation and cell-cycle progression during mitosis and meiosis. In addition phosphorylation at Ser-11 (H3S10ph) by RPS6KA4 and RPS6KA5 is important during interphase because it enables the transcription of genes following external stimulation, like mitogens, stress, growth factors or UV irradiation and result in the activation of genes, such as c-fos and c-jun. Phosphorylation at Ser-11 (H3S10ph), which is linked to gene activation, prevents methylation at Lys-10 (H3K9me) but facilitates acetylation of H3 and H4. Phosphorylation at Ser-11 (H3S10ph) by AURKB mediates the dissociation of HP1 proteins (CBX1, CBX3 and CBX5) from heterochromatin. Phosphorylation at Ser-11 (H3S10ph) is also an essential regulatory mechanism for neoplastic cell transformation. Phosphorylated at Ser-29 (H3S28ph) by MAP3K20 isoform 1, RPS6KA5 or AURKB during mitosis or upon ultraviolet B irradiation. Phosphorylation at Thr-7 (H3T6ph) by PRKCB is a specific tag for epigenetic transcriptional activation that prevents demethylation of Lys-5 (H3K4me) by LSD1/KDM1A. At centromeres, specifically phosphorylated at Thr-12 (H3T11ph) from prophase to early anaphase, by DAPK3 and PKN1. Phosphorylation at Thr-12 (H3T11ph) by PKN1 or isoform M2 of PKM (PKM2) is a specific tag for epigenetic transcriptional activation that promotes demethylation of Lys-10 (H3K9me) by KDM4C/JMJD2C. Phosphorylation at Tyr-42 (H3Y41ph) by JAK2 promotes exclusion of CBX5 (HP1 alpha) from chromatin. Post-translationally, lysine deamination at Lys-5 (H3K4all) to form allysine only takes place on H3K4me3 and results in gene repression. Butyrylation of histones marks active promoters and competes with histone acetylation. It is present during late spermatogenesis. In terms of processing, succinylation at Lys-80 (H3K79succ) by KAT2A takes place with a maximum frequency around the transcription start sites of genes. It gives a specific tag for epigenetic transcription activation. Desuccinylation at Lys-123 (H3K122succ) by SIRT7 in response to DNA damage promotes chromatin condensation and double-strand breaks (DSBs) repair. Post-translationally, serine ADP-ribosylation constitutes the primary form of ADP-ribosylation of proteins in response to DNA damage. Serine ADP-ribosylation at Ser-11 (H3S10ADPr) is mutually exclusive with phosphorylation at Ser-11 (H3S10ph) and impairs acetylation at Lys-10 (H3K9ac).

The protein localises to the nucleus. It localises to the chromosome. Core component of nucleosome. Nucleosomes wrap and compact DNA into chromatin, limiting DNA accessibility to the cellular machineries which require DNA as a template. Histones thereby play a central role in transcription regulation, DNA repair, DNA replication and chromosomal stability. DNA accessibility is regulated via a complex set of post-translational modifications of histones, also called histone code, and nucleosome remodeling. This Cairina moschata (Muscovy duck) protein is Histone H3.3C.